A 283-amino-acid polypeptide reads, in one-letter code: Non-selective voltage-gated ion channel VDAC3 (283 aa).

Position 2 is an N-acetylcysteine (C2). Phosphothreonine is present on T4. An N6-acetyllysine mark is found at K12, K15, and K20. 2 beta stranded membrane passes run 26 to 35 and 39 to 47; these read MVKIDLKTKS and VEFSTSGHA. Glycyl lysine isopeptide (Lys-Gly) (interchain with G-Cter in ubiquitin) cross-links involve residues K53 and K61. Beta stranded transmembrane passes span 54 to 64, 69 to 76, and 80 to 89; these read ASGNLETKYKV, LTFTQKWN, and TLGTEISWEN. An N6-acetyllysine modification is found at K90. The beta stranded transmembrane segment at 95-104 threads the bilayer; it reads LKLTLDTIFV. Residues K109 and K110 each participate in a glycyl lysine isopeptide (Lys-Gly) (interchain with G-Cter in ubiquitin) cross-link. The next 10 membrane-spanning stretches (beta stranded) occupy residues 111–120, 123–130, 137–145, 150–158, 163–175, 178–185, 189–198, 202–211, 218–227, and 231–238; these read SGKLKASYKR, FSVGSNVD, TIYGWAVLA, LAGYQMSFD, KLSQ…GYKA, FQLHTHVN, EFGGSIYQKV, IETSINLAWT, RFGIAAKYML, and TSLSAKVN. Residue K163 forms a Glycyl lysine isopeptide (Lys-Gly) (interchain with G-Cter in ubiquitin) linkage. Position 241 is a phosphoserine (S241). NAD(+)-binding positions include 242–244 and 260–264; these read LIG and SALID. 2 beta stranded membrane passes run 242–251 and 254–263; these read LIGLGYTQTL and GVKLTLSALI. K266 carries the N6-acetyllysine; alternate modification. A Glycyl lysine isopeptide (Lys-Gly) (interchain with G-Cter in ubiquitin); alternate cross-link involves residue K266. The chain crosses the membrane as a beta stranded span at residues 273–282; it reads HKVGLGFELE. K274 participates in a covalent cross-link: Glycyl lysine isopeptide (Lys-Gly) (interchain with G-Cter in ubiquitin).

Belongs to the eukaryotic mitochondrial porin family. As to quaternary structure, interacts with ARMC12 in a TBC1D21-dependent manner. Interacts with MISFA. Post-translationally, ubiquitinated by PRKN during mitophagy, leading to its degradation and enhancement of mitophagy. Deubiquitinated by USP30. Expressed in erythrocytes (at protein level). Widely expressed. Highest in testis.

It is found in the mitochondrion outer membrane. The protein resides in the membrane. The catalysed reaction is chloride(in) = chloride(out). It catalyses the reaction K(+)(in) = K(+)(out). Non-selective voltage-gated ion channel that mediates the transport of anions and cations through the mitochondrion outer membrane and plasma membrane. Forms a high-conducting channel with a stable open state and a voltage-induced closure with a mild preference for anions over cations. Involved in male fertility and sperm mitochondrial sheath formation. The protein is Non-selective voltage-gated ion channel VDAC3 of Homo sapiens (Human).